The chain runs to 633 residues: Pesticidal crystal protein Cry2Aa (633 aa).

This sequence belongs to the delta endotoxin family.

Functionally, promotes colloidosmotic lysis by binding to the midgut epithelial cells of both dipteran (Aedes aegypti) and lepidopteran (Manduca sexta) larvae. This is Pesticidal crystal protein Cry2Aa (cry2Aa) from Bacillus thuringiensis subsp. kenyae.